Consider the following 567-residue polypeptide: MEYDYIIIGAGSAGNVLAARLTEDADVTVLLLEAGGPDYRLDFRTQMPAALAFPLQGKRYNWAYETDPEPHMNNRRMECGRGKGLGGSSLINGMCYIRGNAMDFDHWASLSGLEDWSYLDCLPYFRKAETRDIGPNDFHGGEGPVNVTTPKIGNNPLFHAMVAAGVQAGYPRTDDLNGYQQEGFGPMDRTVTPKGRRASTARGYLDQARPRNNLTIITHALTDRILFEGKRATGVRYLKGDAGTGQTAYARREVLLCGGAIASPQILQRSGIGPAELLQRLDIPLVQALPGVGENLQDHLEMYLQYSCKQPVSLYPALLWFNQPKIGIEWLFNGTGVGASNQFEAGGFIRSRDAFTWPNIQYHFLPVAINYNGSNAVKEHGFQAHVGSMRSPSRGRIQVKSKDPRQHPSILFNYMSSEQDWHEFRDAIRITREIIAQPALDPYRGREISPGANVQNDDELDAFIREHAETAYHPSCSCKMGDDKMAVVDGQGRVHGVQGLRVVDASIMPQIITGNLNATTIMIAEKIADRIRGCQPLAKSNAAYFIAGDTPARTSPVRHSLPVTSYP.

4–33 contributes to the FAD binding site; the sequence is DYIIIGAGSAGNVLAARLTEDADVTVLLLE. His473 functions as the Proton acceptor in the catalytic mechanism.

The protein belongs to the GMC oxidoreductase family. FAD is required as a cofactor.

The catalysed reaction is choline + A = betaine aldehyde + AH2. It carries out the reaction betaine aldehyde + NAD(+) + H2O = glycine betaine + NADH + 2 H(+). It participates in amine and polyamine biosynthesis; betaine biosynthesis via choline pathway; betaine aldehyde from choline (cytochrome c reductase route): step 1/1. Its function is as follows. Involved in the biosynthesis of the osmoprotectant glycine betaine. Catalyzes the oxidation of choline to betaine aldehyde and betaine aldehyde to glycine betaine at the same rate. This chain is Oxygen-dependent choline dehydrogenase, found in Yersinia pseudotuberculosis serotype O:1b (strain IP 31758).